Reading from the N-terminus, the 92-residue chain is Small ribosomal subunit protein uS19c (92 aa).

Belongs to the universal ribosomal protein uS19 family.

Its subcellular location is the plastid. Protein S19 forms a complex with S13 that binds strongly to the 16S ribosomal RNA. This Cuscuta gronovii (Common dodder) protein is Small ribosomal subunit protein uS19c.